Here is a 254-residue protein sequence, read N- to C-terminus: Putative hydro-lyase SACE_1553 (254 aa).

It belongs to the D-glutamate cyclase family.

This Saccharopolyspora erythraea (strain ATCC 11635 / DSM 40517 / JCM 4748 / NBRC 13426 / NCIMB 8594 / NRRL 2338) protein is Putative hydro-lyase SACE_1553.